The chain runs to 158 residues: Transcription elongation factor GreA (158 aa).

It belongs to the GreA/GreB family.

In terms of biological role, necessary for efficient RNA polymerase transcription elongation past template-encoded arresting sites. The arresting sites in DNA have the property of trapping a certain fraction of elongating RNA polymerases that pass through, resulting in locked ternary complexes. Cleavage of the nascent transcript by cleavage factors such as GreA or GreB allows the resumption of elongation from the new 3'terminus. GreA releases sequences of 2 to 3 nucleotides. The protein is Transcription elongation factor GreA of Ruthia magnifica subsp. Calyptogena magnifica.